We begin with the raw amino-acid sequence, 604 residues long: Probable translation initiation factor IF-2 (604 aa).

The 215-residue stretch at 18 to 232 folds into the tr-type G domain; sequence IRTPIVCVLG…VLIGLAQRYM (215 aa). The interval 27-34 is G1; the sequence is GHVDHGKT. 27 to 34 serves as a coordination point for GTP; the sequence is GHVDHGKT. The tract at residues 52 to 56 is G2; that stretch reads AITQH. The segment at 88-91 is G3; it reads DTPG. GTP-binding positions include 88 to 92 and 142 to 145; these read DTPGH and TKLD. The segment at 142–145 is G4; sequence TKLD. Residues 210–212 form a G5 region; it reads SAH.

The protein belongs to the TRAFAC class translation factor GTPase superfamily. Classic translation factor GTPase family. IF-2 subfamily.

Its function is as follows. Function in general translation initiation by promoting the binding of the formylmethionine-tRNA to ribosomes. Seems to function along with eIF-2. The sequence is that of Probable translation initiation factor IF-2 from Methanospirillum hungatei JF-1 (strain ATCC 27890 / DSM 864 / NBRC 100397 / JF-1).